The following is a 954-amino-acid chain: Glycine dehydrogenase (decarboxylating) (954 aa).

K704 is subject to N6-(pyridoxal phosphate)lysine.

Belongs to the GcvP family. In terms of assembly, the glycine cleavage system is composed of four proteins: P, T, L and H. Pyridoxal 5'-phosphate is required as a cofactor.

It carries out the reaction N(6)-[(R)-lipoyl]-L-lysyl-[glycine-cleavage complex H protein] + glycine + H(+) = N(6)-[(R)-S(8)-aminomethyldihydrolipoyl]-L-lysyl-[glycine-cleavage complex H protein] + CO2. Functionally, the glycine cleavage system catalyzes the degradation of glycine. The P protein binds the alpha-amino group of glycine through its pyridoxal phosphate cofactor; CO(2) is released and the remaining methylamine moiety is then transferred to the lipoamide cofactor of the H protein. The protein is Glycine dehydrogenase (decarboxylating) of Rhizobium leguminosarum bv. trifolii (strain WSM2304).